A 551-amino-acid polypeptide reads, in one-letter code: Interleukin-2 receptor subunit beta (551 aa).

Positions 1–26 are cleaved as a signal peptide; that stretch reads MATLALSWCLPLLILLLPLATSSASA. At 27 to 240 the chain is on the extracellular side; that stretch reads AVNGTSRFTC…TKPAALGKDT (214 aa). Residues asparagine 29, asparagine 43, and asparagine 71 are each glycosylated (N-linked (GlcNAc...) asparagine). Cysteine 36 and cysteine 46 are oxidised to a cystine. The cysteines at positions 74 and 86 are disulfide-linked. The Fibronectin type-III domain maps to 134–234; that stretch reads APISLQVVHV…QPLAFRTKPA (101 aa). A glycan (N-linked (GlcNAc...) asparagine) is linked at asparagine 149. A WSXWS motif motif is present at residues 220–224; the sequence is WSPWS. The chain crosses the membrane as a helical span at residues 241 to 265; the sequence is IPWLGHLLVGLSGAFGFIILVYLLI. Residues 266-551 lie on the Cytoplasmic side of the membrane; that stretch reads NCRNTGPWLK…LQDQDPTHLV (286 aa). The Box 1 motif motif lies at 278–286; sequence LKCHTPDPS. Disordered regions lie at residues 389 to 417, 430 to 484, and 496 to 517; these read EEEPDEGGADAPTGSSPQPLRPLSAEDDA, FSPS…DLVD, and AGEQVPDPGPREPFSFPWARPP.

It belongs to the type I cytokine receptor family. Type 4 subfamily. Non-covalent dimer of an alpha and a beta subunit. IL2R exists in 3 different forms: a high affinity dimer, an intermediate affinity monomer (beta subunit), and a low affinity monomer (alpha subunit). The high and intermediate affinity forms also associate with a gamma subunit. Interacts with SHB upon interleukin stimulation.

It localises to the cell membrane. Its subcellular location is the cell surface. Its function is as follows. Receptor for interleukin-2. This beta subunit is involved in receptor mediated endocytosis and transduces the mitogenic signals of IL2. Probably in association with IL15RA, involved in the stimulation of neutrophil phagocytosis by IL15. The protein is Interleukin-2 receptor subunit beta (IL2RB) of Macaca fascicularis (Crab-eating macaque).